Here is a 607-residue protein sequence, read N- to C-terminus: Polyphenol oxidase, chloroplastic (607 aa).

The transit peptide at 1 to 103 (MASLPWSLTT…LGATKPLAFG (103 aa)) directs the protein to the chloroplast. Residues 39–73 (RNRSRRFAPSKVSCNSANGDPNSDSTSDVRETSSG) are disordered. Residues 50 to 64 (VSCNSANGDPNSDST) show a composition bias toward polar residues. 2 disulfide bridges follow: cysteine 114-cysteine 129 and cysteine 128-cysteine 191. Positions 190, 211, 220, 342, 346, and 375 each coordinate Cu cation. Positions 194-211 (CQGAYDQVGYTDLELQVH) form a cross-link, 2'-(S-cysteinyl)-histidine (Cys-His).

It belongs to the tyrosinase family. Cu(2+) serves as cofactor.

The protein resides in the plastid. It is found in the chloroplast thylakoid lumen. The catalysed reaction is 2 catechol + O2 = 2 1,2-benzoquinone + 2 H2O. Catalyzes the oxidation of mono- and o-diphenols to o-diquinones. This is Polyphenol oxidase, chloroplastic from Vitis vinifera (Grape).